Consider the following 311-residue polypeptide: Ribosomal RNA small subunit methyltransferase H (311 aa).

Residues 33–35 (AGH), Asp53, Phe80, Asp101, and Gln108 contribute to the S-adenosyl-L-methionine site.

Belongs to the methyltransferase superfamily. RsmH family.

The protein resides in the cytoplasm. The catalysed reaction is cytidine(1402) in 16S rRNA + S-adenosyl-L-methionine = N(4)-methylcytidine(1402) in 16S rRNA + S-adenosyl-L-homocysteine + H(+). Its function is as follows. Specifically methylates the N4 position of cytidine in position 1402 (C1402) of 16S rRNA. The sequence is that of Ribosomal RNA small subunit methyltransferase H from Alkaliphilus oremlandii (strain OhILAs) (Clostridium oremlandii (strain OhILAs)).